A 190-amino-acid chain; its full sequence is Hypoxanthine/guanine phosphoribosyltransferase (190 aa).

It belongs to the purine/pyrimidine phosphoribosyltransferase family. Archaeal HPRT subfamily. As to quaternary structure, homodimer.

The protein localises to the cytoplasm. It catalyses the reaction IMP + diphosphate = hypoxanthine + 5-phospho-alpha-D-ribose 1-diphosphate. The enzyme catalyses GMP + diphosphate = guanine + 5-phospho-alpha-D-ribose 1-diphosphate. It participates in purine metabolism; IMP biosynthesis via salvage pathway; IMP from hypoxanthine: step 1/1. Catalyzes a salvage reaction resulting in the formation of IMP that is energically less costly than de novo synthesis. This is Hypoxanthine/guanine phosphoribosyltransferase from Methanobacterium paludis (strain DSM 25820 / JCM 18151 / SWAN1).